We begin with the raw amino-acid sequence, 1070 residues long: Envelopment polyprotein (1070 aa).

The first 17 residues, methionine 1–cysteine 17, serve as a signal peptide directing secretion. Topologically, residues glutamate 18 to lysine 457 are lumenal. 8 cysteine pairs are disulfide-bonded: cysteine 22–cysteine 55, cysteine 152–cysteine 165, cysteine 211–cysteine 221, cysteine 267–cysteine 309, cysteine 296–cysteine 301, cysteine 353–cysteine 356, cysteine 360–cysteine 429, and cysteine 380–cysteine 385. Asparagine 269 carries N-linked (GlcNAc...) asparagine; by host glycosylation. The helical transmembrane segment at tryptophan 458–isoleucine 478 threads the bilayer. Topologically, residues methionine 479–serine 536 are cytoplasmic. The segment at arginine 480–leucine 522 is golgi retention signal. The internal signal sequence for glycoprotein C stretch occupies residues lysine 541–cysteine 560. The propeptide occupies valine 550–cysteine 560. Topologically, residues valine 550 to serine 1023 are lumenal. 10 cysteine pairs are disulfide-bonded: cysteine 561–cysteine 602, cysteine 574–cysteine 584, cysteine 642–cysteine 831, cysteine 648–cysteine 696, cysteine 654–cysteine 703, cysteine 659–cysteine 685, cysteine 689–cysteine 694, cysteine 799–cysteine 813, cysteine 896–cysteine 966, and cysteine 906–cysteine 909. The segment at cysteine 648–cysteine 654 is fusion loop. Residues glycine 690–proline 701 form a fusion loop region. The helical transmembrane segment at leucine 1024–isoleucine 1044 threads the bilayer. Over leucine 1045–serine 1070 the chain is Cytoplasmic.

Belongs to the phlebovirus envelope glycoprotein family. In terms of assembly, heterodimer with glycoprotein C. As to quaternary structure, heterodimer with glycoprotein N. Homotrimer (postfusion). Specific enzymatic cleavages in vivo yield mature proteins Glycoprotein C, and Glycoprotein N. In terms of processing, glycosylated. Post-translationally, palmitoylated.

The protein localises to the virion membrane. Its subcellular location is the host Golgi apparatus membrane. It is found in the host endoplasmic reticulum membrane. Structural component of the virion that interacts with glycoprotein C. It shields the hydrophobic fusion loops of the glycoprotein C, preventing premature fusion. The glycoprotein protrusions are arranged on an icosahedral lattice, with T=12 triangulation. They are able to attach the virion to the host cell receptor CD209/DC-SIGN and to promote fusion of membranes with the late endosome after endocytosis of the virion. Plays a role in the packaging of ribonucleoproteins during virus assembly. Its function is as follows. Structural component of the virion that interacts with glycoprotein N. Acts as a class II fusion protein that is activated upon acidification and subsequent repositioning of the glycoprotein N. The glycoprotein protrusions are arranged on an icosahedral lattice, with T=12 triangulation. They are able to attach the virion to the host cell receptor CD209/DC-SIGN and to promote fusion of membranes with the late endosome after endocytosis of the virion. This is Envelopment polyprotein (GP) from Amblyomma variegatum (Tropical bont tick).